The primary structure comprises 247 residues: tRNA pseudouridine synthase A (247 aa).

Aspartate 53 acts as the Nucleophile in catalysis. Tyrosine 111 provides a ligand contact to substrate.

Belongs to the tRNA pseudouridine synthase TruA family. In terms of assembly, homodimer.

It carries out the reaction uridine(38/39/40) in tRNA = pseudouridine(38/39/40) in tRNA. Formation of pseudouridine at positions 38, 39 and 40 in the anticodon stem and loop of transfer RNAs. In Bacillus pumilus (strain SAFR-032), this protein is tRNA pseudouridine synthase A.